Reading from the N-terminus, the 292-residue chain is High-affinity heme uptake system protein IsdE (292 aa).

An N-terminal signal peptide occupies residues Met-1–Ser-19. Cys-20 carries the N-palmitoyl cysteine lipid modification. A lipid anchor (S-diacylglycerol cysteine) is attached at Cys-20. One can recognise a Fe/B12 periplasmic-binding domain in the interval Arg-35–Lys-291. Residues Val-41, Ala-42, Ser-60, Tyr-61, Met-78, and His-229 each coordinate heme.

This sequence belongs to the bacterial solute-binding protein 8 family. Heme b serves as cofactor.

Its subcellular location is the cell membrane. Involved in heme (porphyrin) scavenging. Binds Fe(2+) and Fe(3+) heme but the largest fraction is Fe(2+) heme. Functions as a high-affinity heme binding protein and probably has a role in relaying heme-iron from cell wall-anchored isd proteins receptors to the probable permease IsdF. In Staphylococcus aureus (strain Mu3 / ATCC 700698), this protein is High-affinity heme uptake system protein IsdE (isdE).